Reading from the N-terminus, the 359-residue chain is L-seryl-tRNA(Sec) kinase (359 aa).

ATP is bound at residue 25-32 (GLPAAGKS).

It belongs to the L-seryl-tRNA(Sec) kinase family. It depends on Mg(2+) as a cofactor.

It catalyses the reaction L-seryl-tRNA(Sec) + ATP = O-phospho-L-seryl-tRNA(Sec) + ADP. It participates in aminoacyl-tRNA biosynthesis; selenocysteinyl-tRNA(Sec) biosynthesis; selenocysteinyl-tRNA(Sec) from L-seryl-tRNA(Sec) (archaeal/eukaryal route): step 1/2. Specifically phosphorylates seryl-tRNA(Sec) to O-phosphoseryl-tRNA(Sec), an activated intermediate for selenocysteine biosynthesis. No activity with other tRNAs has been detected. This is L-seryl-tRNA(Sec) kinase (Pstk) from Mus musculus (Mouse).